The sequence spans 360 residues: Peptide chain release factor 1 (360 aa).

Residue Q235 is modified to N5-methylglutamine. Positions A291–R308 are enriched in basic and acidic residues. The tract at residues A291–F312 is disordered.

This sequence belongs to the prokaryotic/mitochondrial release factor family. Methylated by PrmC. Methylation increases the termination efficiency of RF1.

Its subcellular location is the cytoplasm. Peptide chain release factor 1 directs the termination of translation in response to the peptide chain termination codons UAG and UAA. This Yersinia pseudotuberculosis serotype O:1b (strain IP 31758) protein is Peptide chain release factor 1.